Here is a 172-residue protein sequence, read N- to C-terminus: Small ribosomal subunit protein uS5 (172 aa).

The S5 DRBM domain maps to 16–79 (LKEKLVHINR…EDGKKNVIKV (64 aa)).

This sequence belongs to the universal ribosomal protein uS5 family. As to quaternary structure, part of the 30S ribosomal subunit. Contacts proteins S4 and S8.

With S4 and S12 plays an important role in translational accuracy. In terms of biological role, located at the back of the 30S subunit body where it stabilizes the conformation of the head with respect to the body. This is Small ribosomal subunit protein uS5 from Pelodictyon phaeoclathratiforme (strain DSM 5477 / BU-1).